Reading from the N-terminus, the 250-residue chain is ATTRCDPTLIPIAGGWFELLEGGEALRYRCPPGHIPTPLARRSCGPDGQXEPLXXXXXXXXXXXXXXXXKCRAVWCPPPQDMEHGSFWPRLPRYPPGSRLHFQCFQGFNLRGAPNRTCGEGGRWSGVTPVCDDGSGDCPAPPVXXXXXKEGSRYLLEDTVRFRCGPGLVLLGSAVRQCLEGGVWSGTEPQCRAPLSFDTPSDVAASFMASLSQSVERADSNSSHGPTEKLPRXIRVDGSAXLNVFLLXDA.

Sushi domains lie at 3 to 73, 74 to 133, and 136 to 193; these read TRCD…KCRA, VWCP…VCDD, and GDCP…QCRA. Cystine bridges form between Cys-5–Cys-44, Cys-30–Cys-71, Cys-76–Cys-118, Cys-104–Cys-131, Cys-138–Cys-178, and Cys-164–Cys-191. Asn-115 carries an N-linked (GlcNAc...) asparagine glycan. A glycan (N-linked (GlcNAc...) asparagine) is linked at Asn-221.

This sequence belongs to the peptidase S1 family. Plasma.

It localises to the secreted. Functionally, required in both the classical and alternate pathways of the complement system. The polypeptide is Complement factor B-like protease (Gallus gallus (Chicken)).